Consider the following 360-residue polypeptide: Membrane-bound lytic murein transglycosylase C (360 aa).

The first 16 residues, 1-16, serve as a signal peptide directing secretion; it reads MKKYLALALIAPLLVS. The N-palmitoyl cysteine moiety is linked to residue Cys-17. A lipid anchor (S-diacylglycerol cysteine) is attached at Cys-17.

The protein belongs to the transglycosylase Slt family.

It is found in the cell outer membrane. The catalysed reaction is Exolytic cleavage of the (1-&gt;4)-beta-glycosidic linkage between N-acetylmuramic acid (MurNAc) and N-acetylglucosamine (GlcNAc) residues in peptidoglycan, from either the reducing or the non-reducing ends of the peptidoglycan chains, with concomitant formation of a 1,6-anhydrobond in the MurNAc residue.. In terms of biological role, murein-degrading enzyme. May play a role in recycling of muropeptides during cell elongation and/or cell division. This chain is Membrane-bound lytic murein transglycosylase C, found in Klebsiella pneumoniae (strain 342).